A 136-amino-acid polypeptide reads, in one-letter code: MATLVYFSSLSENTHRFIVRLNLPARRIPLDSSQQLQVSEPYILVVPSYGGGTRHGAVPKQVIQFLNDINNRQLIRGVIAAGNRNFGEAFCLAGDIIARKCHVPYLYRFELMGTSDDIANIYKGVTEFWQRQTAHS.

It belongs to the NrdI family.

Its function is as follows. Probably involved in ribonucleotide reductase function. The protein is Protein NrdI of Erwinia tasmaniensis (strain DSM 17950 / CFBP 7177 / CIP 109463 / NCPPB 4357 / Et1/99).